We begin with the raw amino-acid sequence, 335 residues long: Magnesium-protoporphyrin IX monomethyl ester [oxidative] cyclase (335 aa).

It belongs to the AcsF family. Fe cation serves as cofactor.

The protein localises to the plastid. It localises to the chloroplast. It carries out the reaction Mg-protoporphyrin IX 13-monomethyl ester + 3 NADPH + 3 O2 + 2 H(+) = 3,8-divinyl protochlorophyllide a + 3 NADP(+) + 5 H2O. Its pathway is porphyrin-containing compound metabolism; chlorophyll biosynthesis (light-independent). Functionally, catalyzes the formation of the isocyclic ring in chlorophyll biosynthesis. Mediates the cyclase reaction, which results in the formation of divinylprotochlorophyllide (Pchlide) characteristic of all chlorophylls from magnesium-protoporphyrin IX 13-monomethyl ester (MgPMME). The protein is Magnesium-protoporphyrin IX monomethyl ester [oxidative] cyclase of Cyanidioschyzon merolae (strain NIES-3377 / 10D) (Unicellular red alga).